A 950-amino-acid chain; its full sequence is MEKPSTLLVHFDKGSAAMAGEIKADLEGSDVAAKVDAMKRAVMLLLNGETLPTLFITVVRYVLPSEDHTIQKLLLLYLEIIDKRDAAGRGLPEMILICQNLRNNLHHPNEYIRGVTLRFLCRLSEPEVLEPLVPSILENLDHRHHFIRRHALSAISSIYRLPHGDQLVPDAPELVERALASEQDASARRNAFLMLCTCAQERAVAYLLSNADRVAEWPDLLQMAAVDLIRKVCRSPNRADKGRYIKIIIALLSSPSTAVVYECAGALVSLSSAPTAVRAAANTYCELLSSQSDNNVKLIVLDRLNELRTSHRDVMVDVVMDVLRALASPNLDVKRKVLDLVLDLLTARNVEEVVLYLKKEVVKTQAGELEKSGEYRQMLVQAIHACAVEYPEVAGSVVHLLMDFLGDTNVAAAVDVVLFVREIIETNPKLRVSMIQRLIDTFYQIRASRVCSCALWILGEYSLSLSEVENAISTIKQCLGDVPFYTVSEEGEATDSAKPAQPVVNSVTVSSRRPVVLADGTYATQSAATEAISTPSVAPGSLSSTLNLRSLILSGDFFLAAVISCTLTKLVLRLEEVQPSMVEVNKACTGALLVMTSILQLGQSSYLPHPIDNDSYDRIVLCVRLLCNTGDDVRKVWLQSCRQSFAKMLAEKQFRETEEMKAKAQISHAQPDDLIDFYHLKSRRGMSQLELEDEVQDDLKAATGGFTKDAYDANRLNRILQLTGFSDPVYAEAYVTVHHYDIVLDVTIINRTKETLQNLCLELATMGDLKLVDRPQNYTLAPESSKQIRANIKVSSTETGVIFGNIVYETSNVMERSVVVLNDIHIDIMDYISPATCADVTFRNMWAEFEWENKVAVNTVIQNEKEFLDHIIKSTNMKCLTPPSALDGECGFLAANLYAKSVFGEDALVNISIEKQFDGKLSGYIRIRSKTQGIALSLGDKITLKQKGGS.

HEAT repeat units follow at residues 92 to 126 (PEMI…LSEP), 127 to 164 (EVLE…LPHG), 275 to 312 (TAVR…TSHR), 313 to 350 (DVMV…ARNV), and 392 to 429 (EVAG…TNPK).

In terms of assembly, oligomeric complex that consists of at least the alpha, beta, beta', gamma, delta, epsilon and zeta subunits.

The protein localises to the cytoplasm. Its subcellular location is the golgi apparatus membrane. The protein resides in the cytoplasmic vesicle. It is found in the COPI-coated vesicle membrane. In terms of biological role, the coatomer is a cytosolic protein complex that binds to dilysine motifs and reversibly associates with Golgi non-clathrin-coated vesicles, which further mediate biosynthetic protein transport from the ER, via the Golgi up to the trans Golgi network. Coatomer complex is required for budding from Golgi membranes, and is essential for the retrograde Golgi-to-ER transport of dilysine-tagged proteins. This chain is Coatomer subunit beta-2, found in Oryza sativa subsp. japonica (Rice).